We begin with the raw amino-acid sequence, 352 residues long: UDP-N-acetylglucosamine--N-acetylmuramyl-(pentapeptide) pyrophosphoryl-undecaprenol N-acetylglucosamine transferase 2 (352 aa).

UDP-N-acetyl-alpha-D-glucosamine-binding positions include 11 to 13 (SAG), R164, S194, and Q289.

Belongs to the glycosyltransferase 28 family. MurG subfamily.

The protein resides in the cell membrane. It carries out the reaction di-trans,octa-cis-undecaprenyl diphospho-N-acetyl-alpha-D-muramoyl-L-alanyl-D-glutamyl-meso-2,6-diaminopimeloyl-D-alanyl-D-alanine + UDP-N-acetyl-alpha-D-glucosamine = di-trans,octa-cis-undecaprenyl diphospho-[N-acetyl-alpha-D-glucosaminyl-(1-&gt;4)]-N-acetyl-alpha-D-muramoyl-L-alanyl-D-glutamyl-meso-2,6-diaminopimeloyl-D-alanyl-D-alanine + UDP + H(+). The protein operates within cell wall biogenesis; peptidoglycan biosynthesis. Its function is as follows. Cell wall formation. Catalyzes the transfer of a GlcNAc subunit on undecaprenyl-pyrophosphoryl-MurNAc-pentapeptide (lipid intermediate I) to form undecaprenyl-pyrophosphoryl-MurNAc-(pentapeptide)GlcNAc (lipid intermediate II). This is UDP-N-acetylglucosamine--N-acetylmuramyl-(pentapeptide) pyrophosphoryl-undecaprenol N-acetylglucosamine transferase 2 from Bacillus cereus (strain ATCC 10987 / NRS 248).